We begin with the raw amino-acid sequence, 296 residues long: Ribosomal RNA small subunit methyltransferase J (296 aa).

Residue Asp205 participates in S-adenosyl-L-methionine binding.

It belongs to the methyltransferase superfamily. RsmJ family.

It localises to the cytoplasm. It catalyses the reaction guanosine(1516) in 16S rRNA + S-adenosyl-L-methionine = N(2)-methylguanosine(1516) in 16S rRNA + S-adenosyl-L-homocysteine + H(+). In terms of biological role, specifically methylates the guanosine in position 1516 of 16S rRNA. The chain is Ribosomal RNA small subunit methyltransferase J from Psychrobacter arcticus (strain DSM 17307 / VKM B-2377 / 273-4).